The following is a 582-amino-acid chain: Peptidyl-prolyl cis-trans isomerase FKBP10 (582 aa).

Residues 1-26 (MFPAGPPSHSLLRLPLLQLLLLVVQA) form the signal peptide. PPIase FKBP-type domains are found at residues 62 to 150 (GDFV…LDVW), 174 to 262 (GDFV…IDVH), and 286 to 374 (GDFM…IDFH). Asn-70, Asn-182, Asn-294, Asn-310, Asn-352, Asn-393, and Asn-407 each carry an N-linked (GlcNAc...) asparagine glycan. The 88-residue stretch at 399–486 (GDFVRYHYNC…LFEVELVSRE (88 aa)) folds into the PPIase FKBP-type 4 domain. 2 EF-hand domains span residues 497–532 (WHKDPPANLFEDMDLNKDGEVPPEEFSTFIKAQVSE) and 542–577 (DPEKTIGDMFQNQDRNQDGKITVDELKLKSDEDEER). 10 residues coordinate Ca(2+): Asp-510, Asn-512, Asp-514, Glu-516, Glu-521, Asp-555, Asn-557, Asp-559, Lys-561, and Glu-566. The interval 533 to 582 (GKGRLMPGQDPEKTIGDMFQNQDRNQDGKITVDELKLKSDEDEERVHEEL) is disordered. Positions 556-582 (RNQDGKITVDELKLKSDEDEERVHEEL) are enriched in basic and acidic residues. Positions 579 to 582 (HEEL) match the Prevents secretion from ER motif.

In terms of processing, glycosylated and phosphorylated.

The protein resides in the endoplasmic reticulum lumen. It catalyses the reaction [protein]-peptidylproline (omega=180) = [protein]-peptidylproline (omega=0). With respect to regulation, inhibited by both FK506 and rapamycin, but not by cyclosporin A. Functionally, PPIases accelerate the folding of proteins during protein synthesis. This is Peptidyl-prolyl cis-trans isomerase FKBP10 (FKBP10) from Homo sapiens (Human).